Here is a 908-residue protein sequence, read N- to C-terminus: Metabotropic glutamate receptor 8 (908 aa).

Positions Met-1–Ser-33 are cleaved as a signal peptide. The Extracellular portion of the chain corresponds to Gln-34–Trp-583. The cysteines at positions 64 and 106 are disulfide-linked. N-linked (GlcNAc...) asparagine glycosylation is present at Asn-95. L-glutamate contacts are provided by residues Ser-156, Ala-177–Thr-179, and Tyr-227. Disulfide bonds link Cys-246–Cys-534, Cys-369–Cys-384, Cys-424–Cys-431, Cys-516–Cys-535, Cys-520–Cys-538, Cys-541–Cys-553, and Cys-556–Cys-569. N-linked (GlcNAc...) asparagine glycosylation occurs at Asn-298. Asp-309 is an L-glutamate binding site. Lys-401 is a binding site for L-glutamate. N-linked (GlcNAc...) asparagine glycosylation is found at Asn-452 and Asn-480. An N-linked (GlcNAc...) asparagine glycan is attached at Asn-565. Residues Ala-584–Tyr-608 traverse the membrane as a helical segment. Residues Asn-609–Glu-620 lie on the Cytoplasmic side of the membrane. Residues Leu-621–Ala-641 traverse the membrane as a helical segment. Residues Ala-642–Ile-647 lie on the Extracellular side of the membrane. Residues Cys-648–Thr-668 traverse the membrane as a helical segment. The Cytoplasmic segment spans residues Lys-669–Gln-695. The helical transmembrane segment at Leu-696 to Val-716 threads the bilayer. At Asp-717–Asp-746 the chain is on the extracellular side. A helical transmembrane segment spans residues Leu-747–Ile-768. The Cytoplasmic portion of the chain corresponds to Lys-769–Lys-781. A helical transmembrane segment spans residues Pro-782 to Gly-803. Topologically, residues Thr-804 to Leu-818 are extracellular. The chain crosses the membrane as a helical span at residues Thr-819–Phe-843. Residues His-844–Ile-908 lie on the Cytoplasmic side of the membrane. Residue Lys-882 forms a Glycyl lysine isopeptide (Lys-Gly) (interchain with G-Cter in SUMO1) linkage.

Belongs to the G-protein coupled receptor 3 family. In terms of assembly, interacts with PICK1.

It localises to the cell membrane. G-protein coupled receptor for glutamate. Ligand binding causes a conformation change that triggers signaling via guanine nucleotide-binding proteins (G proteins) and modulates the activity of down-stream effectors, such as adenylate cyclase. Signaling inhibits adenylate cyclase activity. The chain is Metabotropic glutamate receptor 8 (GRM8) from Homo sapiens (Human).